The following is a 370-amino-acid chain: UDP-3-O-acylglucosamine N-acyltransferase (370 aa).

H252 acts as the Proton acceptor in catalysis. The tract at residues 348 to 370 is disordered; it reads NAAAEKRDGPAPNAASKATGDKV.

Belongs to the transferase hexapeptide repeat family. LpxD subfamily. Homotrimer.

It catalyses the reaction a UDP-3-O-[(3R)-3-hydroxyacyl]-alpha-D-glucosamine + a (3R)-hydroxyacyl-[ACP] = a UDP-2-N,3-O-bis[(3R)-3-hydroxyacyl]-alpha-D-glucosamine + holo-[ACP] + H(+). The protein operates within bacterial outer membrane biogenesis; LPS lipid A biosynthesis. In terms of biological role, catalyzes the N-acylation of UDP-3-O-acylglucosamine using 3-hydroxyacyl-ACP as the acyl donor. Is involved in the biosynthesis of lipid A, a phosphorylated glycolipid that anchors the lipopolysaccharide to the outer membrane of the cell. The chain is UDP-3-O-acylglucosamine N-acyltransferase from Paraburkholderia phytofirmans (strain DSM 17436 / LMG 22146 / PsJN) (Burkholderia phytofirmans).